The chain runs to 802 residues: Xylanase/beta-glucanase (802 aa).

A signal peptide spans M1–A31. The GH11 domain maps to A32–I239. The active-site Nucleophile is the E124. Catalysis depends on E226, which acts as the Proton donor. Residues I245 to K523 are b. A CBM-cenC domain is found at N258–K404. Disordered regions lie at residues S414–T436 and T533–L564. 2 stretches are compositionally biased toward low complexity: residues P419 to T436 and T533 to T553. Residues S434–E513 form the Dockerin domain. The interval T524–P555 is linker. Residues A556–Q792 enclose the GH16 domain. E684 serves as the catalytic Nucleophile.

It in the N-terminal section; belongs to the glycosyl hydrolase 11 (cellulase G) family. This sequence in the C-terminal section; belongs to the glycosyl hydrolase 16 family.

The enzyme catalyses Endohydrolysis of (1-&gt;4)-beta-D-xylosidic linkages in xylans.. The catalysed reaction is Hydrolysis of (1-&gt;4)-beta-D-glucosidic linkages in beta-D-glucans containing (1-&gt;3)- and (1-&gt;4)-bonds.. The protein operates within glycan degradation; xylan degradation. In terms of biological role, contains two catalytic domains with xylanase and endo-beta-1,3-1,4 glucanase activities. The chain is Xylanase/beta-glucanase (xynD) from Ruminococcus flavefaciens.